Consider the following 507-residue polypeptide: ATP synthase subunit alpha, plastid (507 aa).

170–177 contributes to the ATP binding site; sequence GDRQTGKT.

Belongs to the ATPase alpha/beta chains family. In terms of assembly, F-type ATPases have 2 components, CF(1) - the catalytic core - and CF(0) - the membrane proton channel. CF(1) has five subunits: alpha(3), beta(3), gamma(1), delta(1), epsilon(1). CF(0) has four main subunits: a, b, b' and c.

The protein resides in the plastid membrane. The catalysed reaction is ATP + H2O + 4 H(+)(in) = ADP + phosphate + 5 H(+)(out). In terms of biological role, produces ATP from ADP in the presence of a proton gradient across the membrane. The alpha chain is a regulatory subunit. The polypeptide is ATP synthase subunit alpha, plastid (Cuscuta gronovii (Common dodder)).